The following is a 305-amino-acid chain: Superkiller complex protein 8 (305 aa).

WD repeat units follow at residues 14-57, 62-101, 104-143, 146-187, 188-227, 230-269, and 272-305; these read AHED…LELQ, GHQL…QIKS, AGPV…KEHS, TRGK…HTLE, GHAM…LAGT, GHGS…CVNT, and DHQD…DCPM.

Belongs to the SKI8 family. In terms of assembly, component of the PAF1 complex. Component of the SKI complex.

It localises to the nucleus. It is found in the cytoplasm. In terms of biological role, component of the PAF1 complex (PAF1C) which has multiple functions during transcription by RNA polymerase II and is implicated in regulation of development and maintenance of embryonic stem cell pluripotency. PAF1C associates with RNA polymerase II through interaction with POLR2A CTD non-phosphorylated and 'Ser-2'- and 'Ser-5'-phosphorylated forms and is involved in transcriptional elongation, acting both independently and synergistically with TCEA1 and in cooperation with the DSIF complex and HTATSF1. Also acts as a component of the SKI complex, a multiprotein complex that assists the RNA-degrading exosome during the mRNA decay and quality-control pathways. The SKI complex catalyzes mRNA extraction from 80S ribosomal complexes in the 3'-5' direction and channels mRNA to the cytosolic exosome for degradation. The polypeptide is Superkiller complex protein 8 (skic8) (Danio rerio (Zebrafish)).